The sequence spans 151 residues: Deoxyuridine 5'-triphosphate nucleotidohydrolase (151 aa).

Substrate contacts are provided by residues 70-72, Asn-83, 87-89, and Met-97; these read RSG and LID.

This sequence belongs to the dUTPase family. Mg(2+) is required as a cofactor.

The catalysed reaction is dUTP + H2O = dUMP + diphosphate + H(+). Its pathway is pyrimidine metabolism; dUMP biosynthesis; dUMP from dCTP (dUTP route): step 2/2. This enzyme is involved in nucleotide metabolism: it produces dUMP, the immediate precursor of thymidine nucleotides and it decreases the intracellular concentration of dUTP so that uracil cannot be incorporated into DNA. In Hamiltonella defensa subsp. Acyrthosiphon pisum (strain 5AT), this protein is Deoxyuridine 5'-triphosphate nucleotidohydrolase.